Consider the following 577-residue polypeptide: Dihydroxy-acid dehydratase (577 aa).

Residues 1-10 show a composition bias toward basic and acidic residues; the sequence is MLKRSFDKSK. A disordered region spans residues 1-22; the sequence is MLKRSFDKSKLPSRHVTEGPSR. Cysteine 56 provides a ligand contact to [2Fe-2S] cluster. Residue aspartate 88 coordinates Mg(2+). Cysteine 129 lines the [2Fe-2S] cluster pocket. Mg(2+) contacts are provided by aspartate 130 and lysine 131. Lysine 131 is subject to N6-carboxylysine. Cysteine 201 is a [2Fe-2S] cluster binding site. Glutamate 453 contacts Mg(2+). The active-site Proton acceptor is the serine 479.

The protein belongs to the IlvD/Edd family. Homodimer. Requires [2Fe-2S] cluster as cofactor. Mg(2+) serves as cofactor.

It catalyses the reaction (2R)-2,3-dihydroxy-3-methylbutanoate = 3-methyl-2-oxobutanoate + H2O. The catalysed reaction is (2R,3R)-2,3-dihydroxy-3-methylpentanoate = (S)-3-methyl-2-oxopentanoate + H2O. It participates in amino-acid biosynthesis; L-isoleucine biosynthesis; L-isoleucine from 2-oxobutanoate: step 3/4. The protein operates within amino-acid biosynthesis; L-valine biosynthesis; L-valine from pyruvate: step 3/4. Functions in the biosynthesis of branched-chain amino acids. Catalyzes the dehydration of (2R,3R)-2,3-dihydroxy-3-methylpentanoate (2,3-dihydroxy-3-methylvalerate) into 2-oxo-3-methylpentanoate (2-oxo-3-methylvalerate) and of (2R)-2,3-dihydroxy-3-methylbutanoate (2,3-dihydroxyisovalerate) into 2-oxo-3-methylbutanoate (2-oxoisovalerate), the penultimate precursor to L-isoleucine and L-valine, respectively. The polypeptide is Dihydroxy-acid dehydratase (Dinoroseobacter shibae (strain DSM 16493 / NCIMB 14021 / DFL 12)).